The following is a 358-amino-acid chain: UDP-N-acetylglucosamine--N-acetylmuramyl-(pentapeptide) pyrophosphoryl-undecaprenol N-acetylglucosamine transferase (358 aa).

UDP-N-acetyl-alpha-D-glucosamine is bound by residues S196 and Q287.

It belongs to the glycosyltransferase 28 family. MurG subfamily.

The protein localises to the cell membrane. The catalysed reaction is Mur2Ac(oyl-L-Ala-gamma-D-Glu-L-Lys-D-Ala-D-Ala)-di-trans,octa-cis-undecaprenyl diphosphate + UDP-N-acetyl-alpha-D-glucosamine = beta-D-GlcNAc-(1-&gt;4)-Mur2Ac(oyl-L-Ala-gamma-D-Glu-L-Lys-D-Ala-D-Ala)-di-trans,octa-cis-undecaprenyl diphosphate + UDP + H(+). Its pathway is cell wall biogenesis; peptidoglycan biosynthesis. In terms of biological role, cell wall formation. Catalyzes the transfer of a GlcNAc subunit on undecaprenyl-pyrophosphoryl-MurNAc-pentapeptide (lipid intermediate I) to form undecaprenyl-pyrophosphoryl-MurNAc-(pentapeptide)GlcNAc (lipid intermediate II). This is UDP-N-acetylglucosamine--N-acetylmuramyl-(pentapeptide) pyrophosphoryl-undecaprenol N-acetylglucosamine transferase from Streptococcus uberis (strain ATCC BAA-854 / 0140J).